Consider the following 335-residue polypeptide: SAM pointed domain-containing Ets transcription factor (335 aa).

Low complexity predominate over residues 1–20 (MGSASPGLSSVSPSHLLLPP). Disordered regions lie at residues 1 to 25 (MGSASPGLSSVSPSHLLLPPDTVSR) and 75 to 100 (AKAPGASSREEPPEEPEQCPVIDSQA). The PNT domain occupies 129-213 (EVLKDIETAC…AHLDIWKSAA (85 aa)). Residues 249 to 332 (IHLWQFLKEL…ISQRLVYQFV (84 aa)) constitute a DNA-binding region (ETS).

The protein belongs to the ETS family. Interacts with the DNA-binding domain of the androgen receptor. Interacts with NKX3-1. Expressed in a very restricted set of primarily hormone-regulated epithelial tissues with particularly high expression in the prostate gland. Significantly lower expression is seen in other hormone regulated tissues such as mammary gland, salivary gland, and ovary. Expressed in prostate carcinoma cells.

It localises to the nucleus. Its function is as follows. May function as an androgen-independent transactivator of the prostate-specific antigen (PSA) promoter. Binds to 5'-GGAT-3' DNA sequences. May play a role in the regulation of the prostate gland and/or prostate cancer development. Acts as a transcriptional activator for SERPINB5 promoter. The sequence is that of SAM pointed domain-containing Ets transcription factor (SPDEF) from Homo sapiens (Human).